A 51-amino-acid polypeptide reads, in one-letter code: Sperm protamine P1 (51 aa).

Residues 1-13 are compositionally biased toward low complexity; sequence MARYRCCRSQSRS. The interval 1–30 is disordered; it reads MARYRCCRSQSRSRYYRQRQRSRRRRRRSC. Residues 14–30 show a composition bias toward basic residues; the sequence is RYYRQRQRSRRRRRRSC. The cysteines at positions 40 and 48 are disulfide-linked.

The protein belongs to the protamine P1 family. Cross-linked by interchain disulfide bonds around the DNA-helix. In terms of processing, phosphorylated by SRPK1. Testis.

The protein resides in the nucleus. It localises to the chromosome. Functionally, protamines substitute for histones in the chromatin of sperm during the haploid phase of spermatogenesis. They compact sperm DNA into a highly condensed, stable and inactive complex. This Homo sapiens (Human) protein is Sperm protamine P1 (PRM1).